The following is a 1086-amino-acid chain: Phosphinothricin tripeptide synthetase PhsC (1086 aa).

The segment at 22-43 (RLRAAAAPGPDPAIPRRPDDDG) is disordered. The interval 45-484 (VPLSFAQHRL…LAALPVLTRD (440 aa)) is condensation. Positions 510-901 (LEDSARRHPD…GRTDHQVKLR (392 aa)) are adenylation. The segment at 983–1007 (GKLDREALPDPLAQSGDTAGNRPPL) is disordered. Positions 1006–1081 (PLLDPVEERI…GLARSVSAER (76 aa)) constitute a Carrier domain. Residue serine 1041 is modified to O-(pantetheine 4'-phosphoryl)serine.

It belongs to the NRP synthetase family. Requires pantetheine 4'-phosphate as cofactor.

The enzyme catalyses holo-[peptidyl-carrier protein] + L-alanine + ATP = L-alanyl-[peptidyl-carrier protein] + AMP + diphosphate. Its pathway is secondary metabolite biosynthesis; bialaphos biosynthesis. Involved in the biosynthesis of phosphinothricin tripeptide (PTT), also known as bialaphos (BA), a natural-product antibiotic and potent herbicide. Adenylates L-alanine and loads it onto a peptidyl carrier domain via a thioester linkage to the phosphopanthetheine moiety. Shows weaker activity with aminobutyric acid and L-serine. The sequence is that of Phosphinothricin tripeptide synthetase PhsC from Streptomyces viridochromogenes (strain DSM 40736 / JCM 4977 / BCRC 1201 / Tue 494).